A 311-amino-acid chain; its full sequence is MASYLDFEKNIQQIDEDLANAKIKGDDEAVKILEKNLEKETQKVYKNLSDYQRLQLARHPDRPYALDYIQAILSDAYEIHGDRAFRDDPAIVCYAGYIGGKKIIVIGEQKGRGTKDKLHRNFGMPHPEGYRKALRVAKMAEKFNIPVLFLVDTPGAYPGVGAEERGQSEAIARNLYELSALKTITIAVVIGEGGSGGALAIGVADKLAMMKNSVFSVISPEGCAAILWNDPSKSEAATKAMKVTADDLKTQGLIDDVIEEPMSGAHRDKENAIKNLSDYVLKAIEELEQYDKRELAALRMQKIFKFGAFAE.

One can recognise a CoA carboxyltransferase C-terminal domain in the interval 36 to 286; that stretch reads NLEKETQKVY…SDYVLKAIEE (251 aa).

It belongs to the AccA family. Acetyl-CoA carboxylase is a heterohexamer composed of biotin carboxyl carrier protein (AccB), biotin carboxylase (AccC) and two subunits each of ACCase subunit alpha (AccA) and ACCase subunit beta (AccD).

The protein localises to the cytoplasm. The catalysed reaction is N(6)-carboxybiotinyl-L-lysyl-[protein] + acetyl-CoA = N(6)-biotinyl-L-lysyl-[protein] + malonyl-CoA. Its pathway is lipid metabolism; malonyl-CoA biosynthesis; malonyl-CoA from acetyl-CoA: step 1/1. Its function is as follows. Component of the acetyl coenzyme A carboxylase (ACC) complex. First, biotin carboxylase catalyzes the carboxylation of biotin on its carrier protein (BCCP) and then the CO(2) group is transferred by the carboxyltransferase to acetyl-CoA to form malonyl-CoA. The polypeptide is Acetyl-coenzyme A carboxylase carboxyl transferase subunit alpha (Campylobacter lari (strain RM2100 / D67 / ATCC BAA-1060)).